The primary structure comprises 239 residues: Fatty acid metabolism regulator protein (239 aa).

One can recognise an HTH gntR-type domain in the interval 6–74 (QSPAGFAEEY…HGKPTKVNNF (69 aa)). The segment at residues 34 to 53 (ERELSELIGVTRTTLREVLQ) is a DNA-binding region (H-T-H motif).

As to quaternary structure, homodimer.

The protein resides in the cytoplasm. Its function is as follows. Multifunctional regulator of fatty acid metabolism. The chain is Fatty acid metabolism regulator protein from Klebsiella pneumoniae (strain 342).